Reading from the N-terminus, the 648-residue chain is PTS system N-acetylglucosamine-specific EIICBA component (648 aa).

At Met1 the chain carries N-formylmethionine. The PTS EIIC type-1 domain maps to 1–371; it reads MNILGFFQRL…FNLKTPGRED (371 aa). 12 helical membrane-spanning segments follow: residues 16–36, 38–58, 70–90, 92–112, 132–152, 159–179, 192–212, 232–252, 260–280, 282–302, 303–323, and 339–359; these read LPIA…PDLL, VAFI…IFAI, GAAA…MVTI, PEIN…GAAY, FVPI…GYVW, IHAG…IFGF, VLNT…GTVF, GFFP…YFAA, VGGM…TEPL, FLFM…TGIS, LFVA…GAID, and MLLV…SLVI. The region spanning 390 to 472 is the PTS EIIB type-1 domain; sequence TQLATNYIAA…KKVVARGPVA (83 aa). Cys412 functions as the Phosphocysteine intermediate; for EIIB activity in the catalytic mechanism. Phosphocysteine; by EIIA is present on Cys412. In terms of domain architecture, PTS EIIA type-1 spans 517–621; that stretch reads DEAFASKAVG…SMISPVVCSN (105 aa). Positions 554 and 569 each coordinate Zn(2+). His569 (tele-phosphohistidine intermediate; for EIIA activity) is an active-site residue. His569 is subject to Phosphohistidine; by HPr.

It depends on Zn(2+) as a cofactor. In terms of processing, 60% of isolated protein was N-formylated.

The protein resides in the cell inner membrane. The catalysed reaction is N(pros)-phospho-L-histidyl-[protein] + N-acetyl-D-glucosamine(out) = N-acetyl-D-glucosamine 6-phosphate(in) + L-histidyl-[protein]. Its activity is regulated as follows. P-chloromercuribenzoate inhibits the accumulation of both N-acetyl-D-glucosamine and antibiotic streptozotocin (2-deoxy-2-(3-methyl-3-nitrosoureido)-D-glucopyranose). N-acetyl-D-glucosamine is a competitive inhibitor for the uptake of streptozotocin. In terms of biological role, the phosphoenolpyruvate-dependent sugar phosphotransferase system (sugar PTS), a major carbohydrate active transport system, catalyzes the phosphorylation of incoming sugar substrates concomitantly with their translocation across the cell membrane. This system is involved in N-acetylglucosamine transport. It can also transport and phosphorylate the antibiotic streptozotocin. Could play a significant role in the recycling of peptidoglycan. The protein is PTS system N-acetylglucosamine-specific EIICBA component of Escherichia coli (strain K12).